We begin with the raw amino-acid sequence, 283 residues long: Phosphate import ATP-binding protein PstB 2 (283 aa).

The ABC transporter domain occupies 36–278; that stretch reads LQVKQFNFYY…PKKKQTEDYI (243 aa). 69–76 serves as a coordination point for ATP; that stretch reads GPSGCGKS.

It belongs to the ABC transporter superfamily. Phosphate importer (TC 3.A.1.7) family. The complex is composed of two ATP-binding proteins (PstB), two transmembrane proteins (PstC and PstA) and a solute-binding protein (PstS).

It localises to the cell inner membrane. It catalyses the reaction phosphate(out) + ATP + H2O = ADP + 2 phosphate(in) + H(+). Functionally, part of the ABC transporter complex PstSACB involved in phosphate import. Responsible for energy coupling to the transport system. The protein is Phosphate import ATP-binding protein PstB 2 of Nitrosococcus oceani (strain ATCC 19707 / BCRC 17464 / JCM 30415 / NCIMB 11848 / C-107).